The chain runs to 696 residues: Serine/threonine-protein kinase sck1 (696 aa).

Disordered stretches follow at residues Met-1 to Val-59 and His-77 to Ser-118. Positions Ser-11–Asp-37 are enriched in polar residues. 2 stretches are compositionally biased toward basic and acidic residues: residues His-38–Glu-49 and His-77–Ser-88. In terms of domain architecture, C2 spans Ile-122 to Pro-272. Positions Phe-302 to Phe-563 constitute a Protein kinase domain. Residues Ile-308 to Val-316 and Lys-331 contribute to the ATP site. Asp-428 acts as the Proton acceptor in catalysis. The AGC-kinase C-terminal domain maps to Ala-564–Gln-643. Thr-632 is subject to Phosphothreonine. Ser-665 carries the post-translational modification Phosphoserine.

It belongs to the protein kinase superfamily. AGC Ser/Thr protein kinase family. cAMP subfamily.

It carries out the reaction L-seryl-[protein] + ATP = O-phospho-L-seryl-[protein] + ADP + H(+). The catalysed reaction is L-threonyl-[protein] + ATP = O-phospho-L-threonyl-[protein] + ADP + H(+). Protein kinase that is part of growth control pathway which is at least partially redundant with the cAMP pathway. Required for trehalase activation. The polypeptide is Serine/threonine-protein kinase sck1 (sck1) (Schizosaccharomyces pombe (strain 972 / ATCC 24843) (Fission yeast)).